The chain runs to 548 residues: (S)-beta-macrocarpene synthase (548 aa).

Asp302 and Asp306 together coordinate Mg(2+). Substrate contacts are provided by Asp302, Asp306, Arg443, and Asn446. Positions 302–306 match the DDXXD motif motif; sequence DDTLD. 3 residues coordinate Mg(2+): Asn446, Ser450, and Glu454.

The protein belongs to the terpene synthase family. Monomer. Mg(2+) is required as a cofactor. It depends on Mn(2+) as a cofactor. Expressed in roots. Not detected in leaves, unless damaged by herbivory or infected by fungi.

It localises to the cytoplasm. The enzyme catalyses (S)-beta-bisabolene = (S)-beta-macrocarpene. The catalysed reaction is (2E,6E)-farnesyl diphosphate = (S)-beta-bisabolene + diphosphate. It catalyses the reaction (2E)-geranyl diphosphate = (4S)-limonene + diphosphate. It carries out the reaction (2E)-geranyl diphosphate = beta-myrcene + diphosphate. The enzyme catalyses (2E)-geranyl diphosphate = terpinolene + diphosphate. The catalysed reaction is (2E)-geranyl diphosphate + H2O = (S)-linalool + diphosphate. The protein operates within secondary metabolite biosynthesis; terpenoid biosynthesis. In terms of biological role, involved in the biosynthesis of the bicyclic sesquiterpene (S)-beta-macrocarpene. Can use both geranyl diphosphate and farnesyl diphosphate as substrate, but not geranylgeranyl diphosphate. Produces mainly (S)-beta-macrocarpene, but also smaller amounts of beta-bisabolene and (E)-beta-farnesene when used with farnesyl diphosphate as substrate. In the presence of geranyl diphosphate, produces the acyclic monoterpenes beta-myrcene and linalool along with minor amounts of the cyclic compounds limonene, alpha-thujene, sabinene and alpha-terpinolene. May be involved in plant defense. The polypeptide is (S)-beta-macrocarpene synthase (Zea mays (Maize)).